Here is a 373-residue protein sequence, read N- to C-terminus: Chorismate synthase (373 aa).

NADP(+) is bound by residues Arg-48 and Arg-54. Residues 131–133 (RSS), 243–244 (NA), Gly-288, 303–307 (KPTSS), and Arg-329 contribute to the FMN site.

This sequence belongs to the chorismate synthase family. In terms of assembly, homotetramer. It depends on FMNH2 as a cofactor.

The catalysed reaction is 5-O-(1-carboxyvinyl)-3-phosphoshikimate = chorismate + phosphate. Its pathway is metabolic intermediate biosynthesis; chorismate biosynthesis; chorismate from D-erythrose 4-phosphate and phosphoenolpyruvate: step 7/7. Functionally, catalyzes the anti-1,4-elimination of the C-3 phosphate and the C-6 proR hydrogen from 5-enolpyruvylshikimate-3-phosphate (EPSP) to yield chorismate, which is the branch point compound that serves as the starting substrate for the three terminal pathways of aromatic amino acid biosynthesis. This reaction introduces a second double bond into the aromatic ring system. The protein is Chorismate synthase of Beijerinckia indica subsp. indica (strain ATCC 9039 / DSM 1715 / NCIMB 8712).